The primary structure comprises 744 residues: Protein pthb1 homolog (744 aa).

A compositionally biased stretch (basic and acidic residues) spans 722 to 733; the sequence is EHSPKELPKIRE. The tract at residues 722-744 is disordered; that stretch reads EHSPKELPKIREEEEEEEQQVTA. The span at 734-744 shows a compositional bias: acidic residues; sequence EEEEEEQQVTA.

Part of BBSome complex, that contains bbs-1, bbs-2, bbs-4, bbs-5, osm-12, bbs-8/ttc-8 and bbs-9. Interacts with bbs-1.

Its function is as follows. Component of the BBSome complex. The BBSome complex is thought to function as a coat complex required for sorting of specific membrane proteins to the primary cilia. The BBSome complex is required for ciliogenesis but is dispensable for centriolar satellite function. Required for proper BBSome complex assembly and its ciliary localization. Required for cilia biogenesis and both the assembly and movement of intraflagellar transport proteins along the ciliary axoneme. In ciliated sensory neurons, required for the sensation of nitric oxide and avoidance of NO-producing organisms like P.aeruginosa. The sequence is that of Protein pthb1 homolog from Caenorhabditis elegans.